Here is a 456-residue protein sequence, read N- to C-terminus: Toxin CfTX-1 (456 aa).

The N-terminal stretch at Met-1–Ala-20 is a signal peptide.

This sequence belongs to the jellyfish toxin family. Type I subfamily. Oligomer. Contains disulfide bonds. As to expression, nematocytes.

The protein localises to the secreted. It localises to the nematocyst. The protein resides in the target cell membrane. Functionally, may cause profound effects on the cardiovascular system of anesthetized rats (at 25 ug/kg), since the fraction containing this toxin and CfTX-2 produces an initial increase in mean arterial pressure, followed by cardiovascular collapse in all animals within 1 minute of injection. To note, the same fraction does not induce significant change in heart rate. Has weak hemolytic activity. Is lethal to crayfish. Causes cutaneous inflammation in humans. May act as a pore-forming toxin, disrupting normal transmembrane ion concentration gradients in susceptible cells. This is Toxin CfTX-1 from Chironex fleckeri (Australian box jellyfish).